We begin with the raw amino-acid sequence, 512 residues long: MEEFPGYFELDRSRQHDFLYPLIFRESIYALAHDHGLNRNRSTLFENEVDYDKKYSLIIVKRLITRMYQRNHLIISANGSVQNPFLGHNKNLYSKILSEGFAVIVEIPFSLRVLSSFERKEKDIAKSPTLRSIHSIFPFLEDQFSHLDYLSHVLIPYPIHLEIAVQTLRYWVKDASSLHLLRIFLHEYWNSFSTPKKHITLFLKGNSRFFLFLYNSYVCEYESIFLFIRNQSSHFQSTSSGVFFERILFYVKIDHLVEVFVGTDFLDIRSFFKDPNMHYVRYQGKSILASKDTPLLMNKWKYYLVNLWQYHFSVWSQPGRININQLGKYSLDFLGYFSNVQLKSSVVRNQTLENSFLINNAMKKLETTVPILPLIGSLSRAKFCNALGHPISKPTRTDSSDSDIIDRFVRICRNLSHYHSGSSKKKSLYRIKYILRLSCVKTLARKHKSSVRAFLKRLGSELGDEFLTEEGVVLAVIFPKASGRLYRGRIWYLDIPCINDWVGDAEGSIFTK.

This sequence belongs to the intron maturase 2 family. MatK subfamily.

The protein resides in the plastid. Its subcellular location is the chloroplast. Usually encoded in the trnK tRNA gene intron. Probably assists in splicing its own and other chloroplast group II introns. The sequence is that of Maturase K from Oenothera parviflora (Small-flowered evening primrose).